The sequence spans 144 residues: Large ribosomal subunit protein uL15 (144 aa).

Residues 1–48 (MIKLESLQDPSPRKRRTKLLGRGPSSGHGKTSCRGHKGDGSRSGYKRR) form a disordered region.

This sequence belongs to the universal ribosomal protein uL15 family. As to quaternary structure, part of the 50S ribosomal subunit.

In terms of biological role, binds to the 23S rRNA. The sequence is that of Large ribosomal subunit protein uL15 from Chlamydia caviae (strain ATCC VR-813 / DSM 19441 / 03DC25 / GPIC) (Chlamydophila caviae).